The chain runs to 482 residues: Glycogen synthase 2 (482 aa).

Residue K18 coordinates ADP-alpha-D-glucose.

Belongs to the glycosyltransferase 1 family. Bacterial/plant glycogen synthase subfamily.

The catalysed reaction is [(1-&gt;4)-alpha-D-glucosyl](n) + ADP-alpha-D-glucose = [(1-&gt;4)-alpha-D-glucosyl](n+1) + ADP + H(+). The protein operates within glycan biosynthesis; glycogen biosynthesis. Functionally, synthesizes alpha-1,4-glucan chains using ADP-glucose. The protein is Glycogen synthase 2 of Bradyrhizobium diazoefficiens (strain JCM 10833 / BCRC 13528 / IAM 13628 / NBRC 14792 / USDA 110).